Here is a 629-residue protein sequence, read N- to C-terminus: tRNA uridine 5-carboxymethylaminomethyl modification enzyme MnmG (629 aa).

FAD-binding positions include Gly13 to Gly18, Val125, and Ser180. Gly273–Phe287 lines the NAD(+) pocket. Gln370 is a binding site for FAD.

It belongs to the MnmG family. Homodimer. Heterotetramer of two MnmE and two MnmG subunits. The cofactor is FAD.

It localises to the cytoplasm. Its function is as follows. NAD-binding protein involved in the addition of a carboxymethylaminomethyl (cmnm) group at the wobble position (U34) of certain tRNAs, forming tRNA-cmnm(5)s(2)U34. The chain is tRNA uridine 5-carboxymethylaminomethyl modification enzyme MnmG from Salmonella paratyphi C (strain RKS4594).